The primary structure comprises 450 residues: Signal recognition particle protein (450 aa).

GTP-binding positions include 106–113, 188–192, and 246–249; these read GLQGSGKT, DTAGR, and TKLD.

This sequence belongs to the GTP-binding SRP family. SRP54 subfamily. As to quaternary structure, part of the signal recognition particle protein translocation system, which is composed of SRP and FtsY.

Its subcellular location is the cytoplasm. The enzyme catalyses GTP + H2O = GDP + phosphate + H(+). Involved in targeting and insertion of nascent membrane proteins into the cytoplasmic membrane. Binds to the hydrophobic signal sequence of the ribosome-nascent chain (RNC) as it emerges from the ribosomes. The SRP-RNC complex is then targeted to the cytoplasmic membrane where it interacts with the SRP receptor FtsY. This chain is Signal recognition particle protein, found in Mycoplasma pneumoniae (strain ATCC 29342 / M129 / Subtype 1) (Mycoplasmoides pneumoniae).